We begin with the raw amino-acid sequence, 263 residues long: Nitrogenase iron protein 2 (263 aa).

9-16 (GKGGIGKS) provides a ligand contact to ATP. Cysteine 92 is a binding site for [4Fe-4S] cluster. The residue at position 95 (arginine 95) is an ADP-ribosylarginine; by dinitrogenase reductase ADP-ribosyltransferase. Cysteine 127 serves as a coordination point for [4Fe-4S] cluster.

It belongs to the NifH/BchL/ChlL family. In terms of assembly, homodimer. [4Fe-4S] cluster serves as cofactor. Post-translationally, the reversible ADP-ribosylation of Arg-95 inactivates the nitrogenase reductase and regulates nitrogenase activity.

The catalysed reaction is N2 + 8 reduced [2Fe-2S]-[ferredoxin] + 16 ATP + 16 H2O = H2 + 8 oxidized [2Fe-2S]-[ferredoxin] + 2 NH4(+) + 16 ADP + 16 phosphate + 6 H(+). In terms of biological role, the key enzymatic reactions in nitrogen fixation are catalyzed by the nitrogenase complex, which has 2 components: the iron protein and the molybdenum-iron protein. In Methanobacterium ivanovii, this protein is Nitrogenase iron protein 2 (nifH2).